The sequence spans 137 residues: Bacteriohemerythrin (137 aa).

Fe cation is bound by residues His-21, His-53, Glu-57, His-72, His-76, His-112, and Asp-117.

This sequence belongs to the hemerythrin family. In terms of assembly, monomer.

In terms of biological role, oxygen-binding protein. May be involved in a storage mechanism or for delivery to oxygen-requiring enzymes. The oxygen-binding site contains two iron atoms. The sequence is that of Bacteriohemerythrin from Ralstonia nicotianae (strain ATCC BAA-1114 / GMI1000) (Ralstonia solanacearum).